Here is a 345-residue protein sequence, read N- to C-terminus: Opioid-binding protein/cell adhesion molecule (345 aa).

A signal peptide spans 1–27; it reads MGVCGYLFLPWKCLVVVSLRLLFLVPT. 3 consecutive Ig-like C2-type domains span residues 39 to 126, 136 to 219, and 223 to 310; these read PKAM…PKTS, PQIM…VKIT, and PPYI…ASIT. Asn44, Asn70, and Asn140 each carry an N-linked (GlcNAc...) asparagine glycan. An intrachain disulfide couples Cys57 to Cys115. 2 disulfide bridges follow: Cys157-Cys202 and Cys244-Cys296. Asn285, Asn293, and Asn306 each carry an N-linked (GlcNAc...) asparagine glycan. Asn322 carries the GPI-anchor amidated asparagine lipid modification. Positions 323-345 are cleaved as a propeptide — removed in mature form; that stretch reads SASRALACLWLSGTLLAHFFIKF.

Belongs to the immunoglobulin superfamily. IgLON family.

It localises to the cell membrane. Its function is as follows. Binds opioids in the presence of acidic lipids; probably involved in cell contact. The polypeptide is Opioid-binding protein/cell adhesion molecule (OPCML) (Homo sapiens (Human)).